We begin with the raw amino-acid sequence, 183 residues long: Ribosome rescue factor SmrB (183 aa).

The 76-residue stretch at L98 to E173 folds into the Smr domain.

This sequence belongs to the SmrB family. In terms of assembly, associates with collided ribosomes, but not with correctly translating polysomes.

In terms of biological role, acts as a ribosome collision sensor. Detects stalled/collided disomes (pairs of ribosomes where the leading ribosome is stalled and a second ribosome has collided with it) and endonucleolytically cleaves mRNA at the 5' boundary of the stalled ribosome. Stalled/collided disomes form a new interface (primarily via the 30S subunits) that binds SmrB. Cleaved mRNA becomes available for tmRNA ligation, leading to ribosomal subunit dissociation and rescue of stalled ribosomes. In Escherichia coli O157:H7, this protein is Ribosome rescue factor SmrB.